Here is a 317-residue protein sequence, read N- to C-terminus: Gluconeogenesis factor (317 aa).

The protein belongs to the gluconeogenesis factor family.

The protein resides in the cytoplasm. Required for morphogenesis under gluconeogenic growth conditions. Required, in gluconeogenic growth conditions, for the correct localization of PBP1 and hence for displaying a normal rod shape. This Bacillus subtilis (strain 168) protein is Gluconeogenesis factor (mgfK).